The sequence spans 557 residues: Urocanate hydratase (557 aa).

The segment at M1–N20 is disordered. Residues G52–G53, Q130, G176–G178, E196, R201, N242–A243, Q263–H267, Y273–L274, and Y322 each bind NAD(+). Residue C410 is part of the active site. G492 serves as a coordination point for NAD(+).

Belongs to the urocanase family. It depends on NAD(+) as a cofactor.

It localises to the cytoplasm. The catalysed reaction is 4-imidazolone-5-propanoate = trans-urocanate + H2O. It participates in amino-acid degradation; L-histidine degradation into L-glutamate; N-formimidoyl-L-glutamate from L-histidine: step 2/3. In terms of biological role, catalyzes the conversion of urocanate to 4-imidazolone-5-propionate. The chain is Urocanate hydratase from Brucella melitensis biotype 1 (strain ATCC 23456 / CCUG 17765 / NCTC 10094 / 16M).